We begin with the raw amino-acid sequence, 231 residues long: Very-long-chain (3R)-3-hydroxyacyl-CoA dehydratase 4 (231 aa).

At Met1–Tyr19 the chain is on the cytoplasmic side. Residues Leu20–Val40 form a helical membrane-spanning segment. Residues Arg41–Ala56 are Lumenal-facing. Residues Ile57–Val77 traverse the membrane as a helical segment. Residues Gly78–Tyr112 lie on the Cytoplasmic side of the membrane. The helical transmembrane segment at Val113–Met133 threads the bilayer. The Lumenal portion of the chain corresponds to Leu134–Ser135. A helical membrane pass occupies residues Val136–Tyr156. Residue Tyr156 is part of the active site. Position 157 (Pro157) is a topological domain, cytoplasmic. A helical membrane pass occupies residues Leu158–Gly178. Residue Glu163 is part of the active site. The Lumenal portion of the chain corresponds to Thr179 to Ser189. The helical transmembrane segment at Phe190–Thr210 threads the bilayer. Residues Tyr211–Met231 are Cytoplasmic-facing.

Belongs to the very long-chain fatty acids dehydratase HACD family. As to quaternary structure, may interact with enzymes of the ELO family (including ELOVL1); with those enzymes that mediate condensation, the first of the four steps of the reaction cycle responsible for fatty acids elongation, may be part of a larger fatty acids elongase complex.

The protein localises to the endoplasmic reticulum membrane. The enzyme catalyses a very-long-chain (3R)-3-hydroxyacyl-CoA = a very-long-chain (2E)-enoyl-CoA + H2O. It catalyses the reaction (3R)-hydroxyhexadecanoyl-CoA = (2E)-hexadecenoyl-CoA + H2O. Its pathway is lipid metabolism; fatty acid biosynthesis. Functionally, catalyzes the third of the four reactions of the long-chain fatty acids elongation cycle. This endoplasmic reticulum-bound enzymatic process, allows the addition of two carbons to the chain of long- and very long-chain fatty acids/VLCFAs per cycle. This enzyme catalyzes the dehydration of the 3-hydroxyacyl-CoA intermediate into trans-2,3-enoyl-CoA, within each cycle of fatty acid elongation. Thereby, it participates in the production of VLCFAs of different chain lengths that are involved in multiple biological processes as precursors of membrane lipids and lipid mediators. This Bos taurus (Bovine) protein is Very-long-chain (3R)-3-hydroxyacyl-CoA dehydratase 4.